The sequence spans 229 residues: Cytochrome c oxidase subunit 2 (229 aa).

Over 1-26 (MATWAQFGLQDASSPLMEELTYFHDY) the chain is Mitochondrial intermembrane. A helical transmembrane segment spans residues 27–48 (ALIVLTLITILVFYGLVSLLLS). Residues 49–62 (SSTNRFFLEGQELE) lie on the Mitochondrial matrix side of the membrane. A helical transmembrane segment spans residues 63–82 (TIWTVVPAFILIFIALPSLQ). At 83–229 (LLYLMDEVNN…ENWVAQYIEE (147 aa)) the chain is on the mitochondrial intermembrane side. Cu cation is bound by residues His161, Cys196, Glu198, Cys200, His204, and Met207. Residue Glu198 coordinates Mg(2+).

This sequence belongs to the cytochrome c oxidase subunit 2 family. Component of the cytochrome c oxidase (complex IV, CIV), a multisubunit enzyme composed of a catalytic core of 3 subunits and several supernumerary subunits. The complex exists as a monomer or a dimer and forms supercomplexes (SCs) in the inner mitochondrial membrane with ubiquinol-cytochrome c oxidoreductase (cytochrome b-c1 complex, complex III, CIII). Cu cation is required as a cofactor.

The protein localises to the mitochondrion inner membrane. The catalysed reaction is 4 Fe(II)-[cytochrome c] + O2 + 8 H(+)(in) = 4 Fe(III)-[cytochrome c] + 2 H2O + 4 H(+)(out). Its function is as follows. Component of the cytochrome c oxidase, the last enzyme in the mitochondrial electron transport chain which drives oxidative phosphorylation. The respiratory chain contains 3 multisubunit complexes succinate dehydrogenase (complex II, CII), ubiquinol-cytochrome c oxidoreductase (cytochrome b-c1 complex, complex III, CIII) and cytochrome c oxidase (complex IV, CIV), that cooperate to transfer electrons derived from NADH and succinate to molecular oxygen, creating an electrochemical gradient over the inner membrane that drives transmembrane transport and the ATP synthase. Cytochrome c oxidase is the component of the respiratory chain that catalyzes the reduction of oxygen to water. Electrons originating from reduced cytochrome c in the intermembrane space (IMS) are transferred via the dinuclear copper A center (CU(A)) of subunit 2 and heme A of subunit 1 to the active site in subunit 1, a binuclear center (BNC) formed by heme A3 and copper B (CU(B)). The BNC reduces molecular oxygen to 2 water molecules using 4 electrons from cytochrome c in the IMS and 4 protons from the mitochondrial matrix. The chain is Cytochrome c oxidase subunit 2 (COII) from Paracentrotus lividus (Common sea urchin).